Reading from the N-terminus, the 2058-residue chain is E3 ubiquitin-protein ligase ubr-1 (2058 aa).

Residues 93 to 164 (QICGHVFKNG…EGYACANHEK (72 aa)) form a UBR-type zinc finger. Residues 1107–1175 (VPEAAPAPEN…TPSEKSETVV (69 aa)) are disordered. Over residues 1108-1119 (PEAAPAPENKPA) the composition is skewed to low complexity. 2 stretches are compositionally biased toward basic and acidic residues: residues 1123 to 1138 (EEIK…EMRQ) and 1153 to 1175 (KKIE…ETVV). An RING-type; atypical zinc finger spans residues 1217–1335 (LTCILCQEDE…GEYQCPLCKR (119 aa)). Disordered regions lie at residues 1381 to 1416 (LSSE…DTAN) and 1475 to 1499 (PAAT…ESGK). Positions 1388–1397 (KKGHSRKRSH) are enriched in basic residues. The segment covering 1398 to 1413 (SERSLLDLEKLSKDPD) has biased composition (basic and acidic residues). The segment covering 1486-1495 (GSSSRIPESQ) has biased composition (polar residues). The chain crosses the membrane as a helical span at residues 1695–1715 (ILQIDILSLAISLMMTIGWTW).

Belongs to the E3 ubiquitin-protein ligase UBR1-like family. Interacts with ubc-1. Component of a complex containing at least ced-3, ubr-1 and possibly ate-1. Within complex interacts with ced-3 (via the p17 subunit); this interaction is required for the ced-3-mediated cleavage and subsequent degradation of the heterochronic protein lin-28. As to expression, expressed in pharyngeal muscles, body wall muscles and a subset of neurons throughout postembryonic development. Prominently expressed in premotor interneurons, but not expressed in ventral cord motor neurons. Weakly expressed in hypodermal seam cells.

It localises to the membrane. It carries out the reaction S-ubiquitinyl-[E2 ubiquitin-conjugating enzyme]-L-cysteine + [acceptor protein]-L-lysine = [E2 ubiquitin-conjugating enzyme]-L-cysteine + N(6)-ubiquitinyl-[acceptor protein]-L-lysine.. Its pathway is protein modification; protein ubiquitination. Functionally, E3 ubiquitin-protein ligase which is a component of the N-end rule pathway. Recognizes and binds to proteins bearing specific N-terminal residues that are destabilizing according to the N-end rule, leading to their ubiquitination and subsequent degradation. In complex with ced-3, required for the ced-3-mediated cleavage and subsequent degradation of the heterochronic protein lin-28 to regulate seam cell fate patterning during larval development. Negatively regulates glutamate metabolism through the aspartate aminotransferase got-1.2. Modulation of glutamate levels most likely controls locomotory behavior, in particular backwards locomotion or 'reversals'. In Caenorhabditis elegans, this protein is E3 ubiquitin-protein ligase ubr-1.